A 324-amino-acid polypeptide reads, in one-letter code: Acetyl-coenzyme A carboxylase carboxyl transferase subunit alpha (324 aa).

Residues glutamine 44–glutamate 298 enclose the CoA carboxyltransferase C-terminal domain.

This sequence belongs to the AccA family. As to quaternary structure, acetyl-CoA carboxylase is a heterohexamer composed of biotin carboxyl carrier protein (AccB), biotin carboxylase (AccC) and two subunits each of ACCase subunit alpha (AccA) and ACCase subunit beta (AccD).

Its subcellular location is the cytoplasm. The catalysed reaction is N(6)-carboxybiotinyl-L-lysyl-[protein] + acetyl-CoA = N(6)-biotinyl-L-lysyl-[protein] + malonyl-CoA. It participates in lipid metabolism; malonyl-CoA biosynthesis; malonyl-CoA from acetyl-CoA: step 1/1. Its function is as follows. Component of the acetyl coenzyme A carboxylase (ACC) complex. First, biotin carboxylase catalyzes the carboxylation of biotin on its carrier protein (BCCP) and then the CO(2) group is transferred by the carboxyltransferase to acetyl-CoA to form malonyl-CoA. In Rippkaea orientalis (strain PCC 8801 / RF-1) (Cyanothece sp. (strain PCC 8801)), this protein is Acetyl-coenzyme A carboxylase carboxyl transferase subunit alpha.